We begin with the raw amino-acid sequence, 546 residues long: Glutathione reductase (546 aa).

Residues 2 to 46 (YKHRYFHFFFFFFFFLVSTKIIRSFTFLNNNTNLSNPVYFKKKAN) constitute an apicoplast transit peptide. Positions 58 and 59 each coordinate FAD. Position 58 (Ser58) interacts with glutathione. Glutathione is bound at residue Arg65. 4 residues coordinate FAD: Glu78, Thr85, Cys86, and Lys94. Cys86 and Cys91 form a disulfide bridge. Glutathione is bound at residue Tyr141. Residue Ala157 participates in FAD binding. The NADP(+) site is built by Ile233, Glu236, Arg253, Arg259, and Gly318. Residues Asp358 and Thr400 each coordinate FAD. Residue Arg408 participates in glutathione binding. Val430 provides a ligand contact to NADP(+). His531 is an FAD binding site. Catalysis depends on His531, which acts as the Proton acceptor.

The protein belongs to the class-I pyridine nucleotide-disulfide oxidoreductase family. Homodimer. It depends on FAD as a cofactor.

The protein localises to the cytoplasm. Its subcellular location is the plastid. The protein resides in the apicoplast. The enzyme catalyses 2 glutathione + NADP(+) = glutathione disulfide + NADPH + H(+). Its function is as follows. Catalyzes the reduction of glutathione disulfide (GSSG) to reduced glutathione (GSH). Constitutes the major mechanism to maintain a high GSH:GSSG ratio in the cytosol. This is Glutathione reductase from Plasmodium falciparum (isolate 3D7).